Reading from the N-terminus, the 98-residue chain is Cell cycle protein GpsB (98 aa).

Residues leucine 34–glutamine 72 adopt a coiled-coil conformation.

It belongs to the GpsB family. Forms polymers through the coiled coil domains. Interacts with PBP1, MreC and EzrA.

The protein resides in the cytoplasm. Divisome component that associates with the complex late in its assembly, after the Z-ring is formed, and is dependent on DivIC and PBP2B for its recruitment to the divisome. Together with EzrA, is a key component of the system that regulates PBP1 localization during cell cycle progression. Its main role could be the removal of PBP1 from the cell pole after pole maturation is completed. Also contributes to the recruitment of PBP1 to the division complex. Not essential for septum formation. In Bacillus licheniformis (strain ATCC 14580 / DSM 13 / JCM 2505 / CCUG 7422 / NBRC 12200 / NCIMB 9375 / NCTC 10341 / NRRL NRS-1264 / Gibson 46), this protein is Cell cycle protein GpsB.